The following is a 602-amino-acid chain: Threonine--tRNA ligase (602 aa).

The segment at 208–499 is catalytic; it reads DHRKLGTELK…LTEHCAGEFP (292 aa). Positions 300, 351, and 476 each coordinate Zn(2+).

This sequence belongs to the class-II aminoacyl-tRNA synthetase family. Homodimer. It depends on Zn(2+) as a cofactor.

The protein localises to the cytoplasm. It carries out the reaction tRNA(Thr) + L-threonine + ATP = L-threonyl-tRNA(Thr) + AMP + diphosphate + H(+). Functionally, catalyzes the attachment of threonine to tRNA(Thr) in a two-step reaction: L-threonine is first activated by ATP to form Thr-AMP and then transferred to the acceptor end of tRNA(Thr). Also edits incorrectly charged L-seryl-tRNA(Thr). This is Threonine--tRNA ligase from Campylobacter jejuni subsp. jejuni serotype O:2 (strain ATCC 700819 / NCTC 11168).